The following is a 199-amino-acid chain: uncharacterized protein (199 aa).

Positions 1 to 30 are disordered; the sequence is MEDAAAPGRTEGVLERQGAPPAAGQGGALV. A coiled-coil region spans residues 71–101; that stretch reads RANATNKLTVIAEQIQHLQEQARKVLEDAHR.

This is an uncharacterized protein from Homo sapiens (Human).